Consider the following 1073-residue polypeptide: Carbamoyl phosphate synthase large chain (1073 aa).

Residues methionine 1–aspartate 399 form a carboxyphosphate synthetic domain region. Residues arginine 129, arginine 169, glycine 175, glycine 176, glutamate 208, valine 210, glutamate 215, glycine 241, valine 242, histidine 243, glutamine 284, and glutamate 296 each contribute to the ATP site. Residues lysine 133–isoleucine 325 form the ATP-grasp 1 domain. Mg(2+)-binding residues include glutamine 284, glutamate 296, and asparagine 298. Positions 284, 296, and 298 each coordinate Mn(2+). The interval isoleucine 400–threonine 540 is oligomerization domain. Residues asparagine 541 to leucine 931 form a carbamoyl phosphate synthetic domain region. The ATP-grasp 2 domain occupies tyrosine 672–alanine 863. ATP-binding residues include arginine 708, aspartate 747, leucine 749, glutamate 754, glycine 779, valine 780, histidine 781, serine 782, glutamine 822, and glutamate 834. Mg(2+) is bound by residues glutamine 822, glutamate 834, and asparagine 836. Mn(2+) is bound by residues glutamine 822, glutamate 834, and asparagine 836. In terms of domain architecture, MGS-like spans asparagine 930–lysine 1071. The interval leucine 932–glutamate 1073 is allosteric domain.

It belongs to the CarB family. As to quaternary structure, composed of two chains; the small (or glutamine) chain promotes the hydrolysis of glutamine to ammonia, which is used by the large (or ammonia) chain to synthesize carbamoyl phosphate. Tetramer of heterodimers (alpha,beta)4. Mg(2+) serves as cofactor. Mn(2+) is required as a cofactor.

The enzyme catalyses hydrogencarbonate + L-glutamine + 2 ATP + H2O = carbamoyl phosphate + L-glutamate + 2 ADP + phosphate + 2 H(+). It carries out the reaction hydrogencarbonate + NH4(+) + 2 ATP = carbamoyl phosphate + 2 ADP + phosphate + 2 H(+). The protein operates within amino-acid biosynthesis; L-arginine biosynthesis; carbamoyl phosphate from bicarbonate: step 1/1. It participates in pyrimidine metabolism; UMP biosynthesis via de novo pathway; (S)-dihydroorotate from bicarbonate: step 1/3. Its function is as follows. Large subunit of the glutamine-dependent carbamoyl phosphate synthetase (CPSase). CPSase catalyzes the formation of carbamoyl phosphate from the ammonia moiety of glutamine, carbonate, and phosphate donated by ATP, constituting the first step of 2 biosynthetic pathways, one leading to arginine and/or urea and the other to pyrimidine nucleotides. The large subunit (synthetase) binds the substrates ammonia (free or transferred from glutamine from the small subunit), hydrogencarbonate and ATP and carries out an ATP-coupled ligase reaction, activating hydrogencarbonate by forming carboxy phosphate which reacts with ammonia to form carbamoyl phosphate. The chain is Carbamoyl phosphate synthase large chain from Methanosarcina mazei (strain ATCC BAA-159 / DSM 3647 / Goe1 / Go1 / JCM 11833 / OCM 88) (Methanosarcina frisia).